We begin with the raw amino-acid sequence, 78 residues long: U7-lycotoxin-Ls1e (78 aa).

A signal peptide spans 1-22; the sequence is MKLIIFTGLALLLIVSLIDVEA. The propeptide occupies 23–26; that stretch reads QNEG.

The protein belongs to the neurotoxin 19 (CSTX) family. 07 (U7-Lctx) subfamily. Post-translationally, contains 4 disulfide bonds. In terms of tissue distribution, expressed by the venom gland.

The protein resides in the secreted. The polypeptide is U7-lycotoxin-Ls1e (Lycosa singoriensis (Wolf spider)).